Here is a 199-residue protein sequence, read N- to C-terminus: N-(5'-phosphoribosyl)anthranilate isomerase (199 aa).

Belongs to the TrpF family.

The enzyme catalyses N-(5-phospho-beta-D-ribosyl)anthranilate = 1-(2-carboxyphenylamino)-1-deoxy-D-ribulose 5-phosphate. Its pathway is amino-acid biosynthesis; L-tryptophan biosynthesis; L-tryptophan from chorismate: step 3/5. This Solibacter usitatus (strain Ellin6076) protein is N-(5'-phosphoribosyl)anthranilate isomerase.